A 181-amino-acid chain; its full sequence is Oligoribonuclease (181 aa).

Positions L8–L171 constitute an Exonuclease domain. Y129 is a catalytic residue.

Belongs to the oligoribonuclease family.

Its subcellular location is the cytoplasm. Functionally, 3'-to-5' exoribonuclease specific for small oligoribonucleotides. The polypeptide is Oligoribonuclease (Shewanella baltica (strain OS155 / ATCC BAA-1091)).